Here is an 856-residue protein sequence, read N- to C-terminus: Increased rDNA silencing protein 4 (856 aa).

3 disordered regions span residues 1-204 (MSAS…EPKS), 230-563 (KQEE…PTPE), and 589-672 (TSLE…DEDL). 3 stretches are compositionally biased toward low complexity: residues 12 to 42 (GPAS…ATLA), 67 to 84 (VPTP…RTVG), and 111 to 130 (SRVV…AGRT). The segment covering 152–162 (HVEERANDHAP) has biased composition (basic and acidic residues). The segment covering 194–204 (ASAKPSSEPKS) has biased composition (low complexity). Basic residues predominate over residues 239-254 (KKKKKKKPRPASKTQH). Composition is skewed to polar residues over residues 255–275 (HQTL…ENQC) and 303–315 (SLST…SSTG). Positions 329–347 (GETRNRNGDVRDKPSREGG) are enriched in basic and acidic residues. Composition is skewed to polar residues over residues 396-410 (PVSQ…TIIS), 451-468 (RVVS…QSAE), and 478-488 (RNSTSSDETFV). Residues 503-514 (KELERVRPRLDR) are compositionally biased toward basic and acidic residues. Over residues 517-535 (TSTSSRASRVSTPASVRSP) the composition is skewed to low complexity. Residues 603 to 620 (RRGHRHHHLPHPHLRHRT) show a composition bias toward basic residues. A compositionally biased stretch (polar residues) spans 644 to 654 (PSRQTEHTQPA). The region spanning 743–832 (DSLGQVDLSR…EGVWESAMDR (90 aa)) is the EH domain.

This sequence belongs to the IRS4 family.

Its function is as follows. Positive regulator of phosphatidylinositol 4,5-bisphosphate turnover and negatively regulates signaling through the cell integrity pathway. Involved in rDNA silencing. This Neurospora crassa (strain ATCC 24698 / 74-OR23-1A / CBS 708.71 / DSM 1257 / FGSC 987) protein is Increased rDNA silencing protein 4 (irs-4).